The primary structure comprises 116 residues: Putative superoxide reductase (116 aa).

5 residues coordinate Fe cation: histidine 20, histidine 46, histidine 52, cysteine 101, and histidine 104.

This sequence belongs to the desulfoferrodoxin family. The cofactor is Fe cation.

It catalyses the reaction reduced [rubredoxin] + superoxide + 2 H(+) = oxidized [rubredoxin] + H2O2. Uses electrons from reduced NADP, by way of rubredoxin and an oxidoreductase, to catalyze the reduction of superoxide to hydrogen peroxide. This chain is Putative superoxide reductase, found in Methanocaldococcus jannaschii (strain ATCC 43067 / DSM 2661 / JAL-1 / JCM 10045 / NBRC 100440) (Methanococcus jannaschii).